A 913-amino-acid chain; its full sequence is Protein translocase subunit SecA (913 aa).

Residues Gln-87, 105 to 109 (GEGKT), and Asp-512 each bind ATP. Residues Cys-897, Cys-899, Cys-908, and His-909 each contribute to the Zn(2+) site.

It belongs to the SecA family. In terms of assembly, monomer and homodimer. Part of the essential Sec protein translocation apparatus which comprises SecA, SecYEG and auxiliary proteins SecDF-YajC and YidC. The cofactor is Zn(2+).

The protein resides in the cell inner membrane. The protein localises to the cytoplasm. The catalysed reaction is ATP + H2O + cellular proteinSide 1 = ADP + phosphate + cellular proteinSide 2.. Part of the Sec protein translocase complex. Interacts with the SecYEG preprotein conducting channel. Has a central role in coupling the hydrolysis of ATP to the transfer of proteins into and across the cell membrane, serving both as a receptor for the preprotein-SecB complex and as an ATP-driven molecular motor driving the stepwise translocation of polypeptide chains across the membrane. This Pseudomonas fluorescens (strain ATCC BAA-477 / NRRL B-23932 / Pf-5) protein is Protein translocase subunit SecA.